The following is a 62-amino-acid chain: Small ribosomal subunit protein bS21 (62 aa).

The segment at 38 to 62 (YEKPSERRKRKMNAAVRKNRRTRHG) is disordered.

This sequence belongs to the bacterial ribosomal protein bS21 family.

This is Small ribosomal subunit protein bS21 from Gemmatimonas aurantiaca (strain DSM 14586 / JCM 11422 / NBRC 100505 / T-27).